Reading from the N-terminus, the 178-residue chain is ATP synthase subunit delta (178 aa).

Belongs to the ATPase delta chain family. F-type ATPases have 2 components, F(1) - the catalytic core - and F(0) - the membrane proton channel. F(1) has five subunits: alpha(3), beta(3), gamma(1), delta(1), epsilon(1). F(0) has three main subunits: a(1), b(2) and c(10-14). The alpha and beta chains form an alternating ring which encloses part of the gamma chain. F(1) is attached to F(0) by a central stalk formed by the gamma and epsilon chains, while a peripheral stalk is formed by the delta and b chains.

The protein localises to the cell inner membrane. In terms of biological role, f(1)F(0) ATP synthase produces ATP from ADP in the presence of a proton or sodium gradient. F-type ATPases consist of two structural domains, F(1) containing the extramembraneous catalytic core and F(0) containing the membrane proton channel, linked together by a central stalk and a peripheral stalk. During catalysis, ATP synthesis in the catalytic domain of F(1) is coupled via a rotary mechanism of the central stalk subunits to proton translocation. This protein is part of the stalk that links CF(0) to CF(1). It either transmits conformational changes from CF(0) to CF(1) or is implicated in proton conduction. The chain is ATP synthase subunit delta from Nitrosomonas europaea (strain ATCC 19718 / CIP 103999 / KCTC 2705 / NBRC 14298).